The following is a 786-amino-acid chain: Endonuclease MutS2 (786 aa).

Position 335-342 (335-342 (GPNTGGKT)) interacts with ATP. A Smr domain is found at 711–786 (LDLRGERFEN…GLGVTVVELK (76 aa)).

Belongs to the DNA mismatch repair MutS family. MutS2 subfamily. As to quaternary structure, homodimer. Binds to stalled ribosomes, contacting rRNA.

Its function is as follows. Endonuclease that is involved in the suppression of homologous recombination and thus may have a key role in the control of bacterial genetic diversity. Acts as a ribosome collision sensor, splitting the ribosome into its 2 subunits. Detects stalled/collided 70S ribosomes which it binds and splits by an ATP-hydrolysis driven conformational change. Acts upstream of the ribosome quality control system (RQC), a ribosome-associated complex that mediates the extraction of incompletely synthesized nascent chains from stalled ribosomes and their subsequent degradation. Probably generates substrates for RQC. The protein is Endonuclease MutS2 of Bacillus cytotoxicus (strain DSM 22905 / CIP 110041 / 391-98 / NVH 391-98).